The primary structure comprises 91 residues: Small ribosomal subunit protein bS20 (91 aa).

The disordered stretch occupies residues 1 to 25 (MANTKSAEKRHRQSLKRRARNVTVR). The span at 8–20 (EKRHRQSLKRRAR) shows a compositional bias: basic residues.

This sequence belongs to the bacterial ribosomal protein bS20 family.

Functionally, binds directly to 16S ribosomal RNA. This Myxococcus xanthus (strain DK1622) protein is Small ribosomal subunit protein bS20.